The chain runs to 33 residues: Brevinin-2 (33 aa).

Cysteine 27 and cysteine 33 form a disulfide bridge.

It belongs to the frog skin active peptide (FSAP) family. Brevinin subfamily. Expressed by the skin glands.

The protein localises to the secreted. Its function is as follows. Shows antibacterial activity against representative Gram-negative and Gram-positive bacterial species, and a very high hemolytic activity. This is Brevinin-2 from Pelophylax porosus brevipodus (Nagoya Daruma pond frog).